We begin with the raw amino-acid sequence, 585 residues long: Protein NRT1/ PTR FAMILY 8.3 (585 aa).

The residue at position 2 (Gly2) is an N-acetylglycine. Residues 91–111 (WQGTCYLTPLIGAVLADAYWG) traverse the membrane as a helical segment. Position 115 is a phosphothreonine (Thr115). 10 helical membrane-spanning segments follow: residues 116-136 (IACF…SASV), 154-174 (PAQY…TGGI), 200-220 (FFNW…SLLV), 228-248 (WGLG…SFFF), 351-371 (FPIW…STMF), 387-407 (LPPA…VPLY), 431-451 (MGIG…VEII), 472-492 (VLWQ…YFIG), 511-531 (ALAL…LTLV), and 556-576 (FFWL…FSAA).

This sequence belongs to the major facilitator superfamily. Proton-dependent oligopeptide transporter (POT/PTR) (TC 2.A.17) family. As to expression, highly expressed in young leaves, roots and germinating seeds, intermediately in stems, flowers and mature leaves and at low level in siliques.

It localises to the vacuole membrane. With respect to regulation, inhibited by leucyl-ethionine. Functionally, peptide transporter. Mediates the transport of di- and tripeptides. High affinity, low capacity transporter. Can also transport histidine. This chain is Protein NRT1/ PTR FAMILY 8.3 (NPF8.3), found in Arabidopsis thaliana (Mouse-ear cress).